A 210-amino-acid polypeptide reads, in one-letter code: Thymidylate kinase (210 aa).

An ATP-binding site is contributed by 10 to 17 (GLEGAGKS).

The protein belongs to the thymidylate kinase family.

It catalyses the reaction dTMP + ATP = dTDP + ADP. In terms of biological role, phosphorylation of dTMP to form dTDP in both de novo and salvage pathways of dTTP synthesis. The sequence is that of Thymidylate kinase from Haemophilus influenzae (strain PittEE).